The primary structure comprises 364 residues: Programmed cell death protein 2-like (364 aa).

The residue at position 2 (Ala2) is an N-acetylalanine. Positions 125-150 (EGSQDWGSDTEETPPPPASDLGSDSN) are disordered.

Functionally, over-expression suppresses AP1, CREB, NFAT, and NF-kB transcriptional activation, and delays cell cycle progression at S phase. This is Programmed cell death protein 2-like (Pdcd2l) from Mus musculus (Mouse).